A 65-amino-acid chain; its full sequence is MAEVKLQEGESLENALRRFKRKVQQEDIIKEVKRHSFYLKPGEKKRVKEALARKRSRKKARKEQD.

Residues 43–52 (EKKRVKEALA) show a composition bias toward basic and acidic residues. Residues 43–65 (EKKRVKEALARKRSRKKARKEQD) are disordered. The span at 53–65 (RKRSRKKARKEQD) shows a compositional bias: basic residues.

Belongs to the bacterial ribosomal protein bS21 family.

The polypeptide is Small ribosomal subunit protein bS21 (Koribacter versatilis (strain Ellin345)).